The sequence spans 131 residues: Large ribosomal subunit protein bL17 (131 aa).

It belongs to the bacterial ribosomal protein bL17 family. As to quaternary structure, part of the 50S ribosomal subunit. Contacts protein L32.

The chain is Large ribosomal subunit protein bL17 from Paraburkholderia phymatum (strain DSM 17167 / CIP 108236 / LMG 21445 / STM815) (Burkholderia phymatum).